The chain runs to 553 residues: Mucolipin-3 (553 aa).

Residues 1–62 lie on the Cytoplasmic side of the membrane; sequence MANPEIVISS…FWARGRKPWK (62 aa). The tract at residues 52-62 is interaction with phosphoinositides; it reads KFWARGRKPWK. Residues 63-83 form a helical membrane-spanning segment; that stretch reads LAIQILKIAMVTIQLVLFGLS. Residues 84–283 are Extracellular-facing; sequence NQMVVAFKEE…VSGSIQKNTH (200 aa). An extracellular/lumenal pore loop region spans residues 104–118; it reads KGYIDRMDDTYAVYT. The N-linked (GlcNAc...) asparagine glycan is linked to Asn138. Cys159 and Cys185 form a disulfide bridge. Asn205 carries N-linked (GlcNAc...) asparagine glycosylation. Cys238 and Cys269 are joined by a disulfide. Residues 284–304 traverse the membrane as a helical segment; sequence NMMIFDAFVILTCLVSLILCI. Residues 305–341 lie on the Cytoplasmic side of the membrane; the sequence is RSVISGLQLQQEFVNFFLLHYKKDVSVSDQMEFVNGW. The chain crosses the membrane as a helical span at residues 342-362; that stretch reads YIMIIISDILTIIGSILKMEI. Residues 363-371 lie on the Extracellular side of the membrane; that stretch reads QAKSLTSYD. Residues 372 to 392 form a helical membrane-spanning segment; sequence VCSILLGTSTMLVWLGVIRYL. The Cytoplasmic portion of the chain corresponds to 393-414; sequence GFFAKYNLLILTLQAALPNVIR. A helical membrane pass occupies residues 415 to 435; the sequence is FCCCAAMIYLGYCFCGWIVLG. Topologically, residues 436-443 are extracellular; it reads PYHNKFRS. Residues 444 to 464 constitute an intramembrane region (pore-forming); sequence LNMVSECLFSLINGDDMFATF. A Selectivity filter motif is present at residues 456 to 459; it reads NGDD. Over 465 to 475 the chain is Extracellular; that stretch reads AKMQQKSYLVW. The chain crosses the membrane as a helical span at residues 476 to 497; the sequence is LFSRIYLYSFISLFIYMILSLF. Topologically, residues 498-553 are cytoplasmic; sequence IALITDTYETIKHYQQDGFPETELRTFISECKDLPNSGKFRLEDDPPVSLFCCCKK.

Belongs to the transient receptor (TC 1.A.4) family. Polycystin subfamily. MCOLN3 sub-subfamily. As to quaternary structure, homotetramer. Can heterooligomerize with MCOLN1; heteromeric assemblies have different channel properties as compared to the respective homooligomers and may be tissue-specific. May heterooligomerize with TRPV5 to form a functional distinct ion channel. Interacts with GABARAPL2. N-glycosylated.

Its subcellular location is the lysosome membrane. It localises to the early endosome membrane. The protein localises to the late endosome membrane. The protein resides in the cytoplasmic vesicle. It is found in the autophagosome membrane. Its subcellular location is the cell projection. It localises to the stereocilium membrane. The catalysed reaction is Ca(2+)(in) = Ca(2+)(out). The enzyme catalyses Mg(2+)(in) = Mg(2+)(out). It catalyses the reaction K(+)(in) = K(+)(out). It carries out the reaction Na(+)(in) = Na(+)(out). Its activity is regulated as follows. Channel activity is activated by PtdIns(3,5)P2 (phosphatidylinositol 3,5-bisphosphate). Inhibited by lumenal H(+) and Na(+). The channel pore shows dynamic behavior and undergoes spontaneous, Ca(2+)-dependent modulation when conducting Ca(2+). Nonselective cation channel probably playing a role in the regulation of membrane trafficking events. Acts as a Ca(2+)-permeable cation channel with inwardly rectifying activity. Mediates release of Ca(2+) from endosomes to the cytoplasm, contributes to endosomal acidification and is involved in the regulation of membrane trafficking and fusion in the endosomal pathway. Also permeable to Mg(2+), Na(+) and K(+). Does not seem to act as mechanosensory transduction channel in inner ear sensory hair cells. Proposed to play a critical role at the cochlear stereocilia ankle-link region during hair-bundle growth. Involved in the regulation of autophagy. Through association with GABARAPL2 may be involved in autophagosome formation possibly providing Ca(2+) for the fusion process. Through a possible and probably tissue-specific heteromerization with MCOLN1 may be at least in part involved in many lysosome-dependent cellular events. Possible heteromeric ion channel assemblies with TRPV5 show pharmacological similarity with TRPML3. This is Mucolipin-3 from Callithrix jacchus (White-tufted-ear marmoset).